Reading from the N-terminus, the 432-residue chain is Calcium uptake protein 2, mitochondrial (432 aa).

A mitochondrion-targeting transit peptide spans 1 to 22 (MAAAAGRSAWLAAWGGRLRRGL). One can recognise an EF-hand 1 domain in the interval 169-204 (KPHSGFHVAFKMLDVDGNEMIERKEFVKLQKIISKQ). 6 residues coordinate Ca(2+): aspartate 182, aspartate 184, asparagine 186, methionine 188, glutamate 190, and glutamate 193. Residue serine 202 is modified to Phosphoserine. An EF-hand 2; degenerate domain is found at 224 to 259 (EPGVNTTLQVRFFGKRGEKKLHYKEFRRFMENLQTE). An EF-hand 3; degenerate domain is found at 290–325 (TENKDIYWRNVREKLSVGESISLDEFKSFCHFTTHL). In terms of domain architecture, EF-hand 4 spans 359-394 (LSDNLLDTVFKIFDLDGDECLSHGEFLGVLKNRMHR). Ca(2+) is bound by residues aspartate 372, aspartate 374, aspartate 376, cysteine 378, and glutamate 383.

It belongs to the MICU1 family. MICU2 subfamily. Heterodimer; disulfide-linked; heterodimerizes with MICU1. Component of the uniplex complex, composed of MCU, EMRE/SMDT1, MICU1 and MICU2 in a 4:4:1:1 stoichiometry. Predominantly expressed in stomach, intestine, skeletal muscle, kidney, heart, testis, prostate and uterus.

The protein resides in the mitochondrion intermembrane space. Its subcellular location is the mitochondrion inner membrane. Calcium sensor of the mitochondrial calcium uniporter (MCU) channel, which senses calcium level via its EF-hand domains. MICU1 and MICU2 form a disulfide-linked heterodimer that stimulates and inhibits MCU activity, depending on the concentration of calcium. At low calcium levels, MICU1 occludes the pore of the MCU channel, preventing mitochondrial calcium uptake. At higher calcium levels, calcium-binding to MICU1 and MICU2 induces a conformational change that weakens MCU-MICU1 interactions and moves the MICU1-MICU2 heterodimer away from the pore, allowing calcium permeation through the MCU channel. The sequence is that of Calcium uptake protein 2, mitochondrial from Mus musculus (Mouse).